We begin with the raw amino-acid sequence, 1839 residues long: Adenylate cyclase (1839 aa).

Disordered stretches follow at residues 1–21 (MSSPTDAERVNMRREKHPQIE), 43–87 (ITTH…PRFS), 126–245 (TSLL…PIVS), 272–315 (KNTE…QWTA), 332–388 (KRKA…DSND), and 400–468 (ESSG…SFSK). Polar residues predominate over residues 165–211 (SQSNESRGTRSSIFFPSTSNSRRGSATSTMTSGSRSSHPPDTPPITS). The span at 212–221 (QQQEQQYDQQ) shows a compositional bias: low complexity. The segment covering 222-233 (RQQRPETREQEQ) has biased composition (basic and acidic residues). Over residues 332-355 (KRKAKHHHHYHHPQHPRPPHRKHY) the composition is skewed to basic residues. Positions 361–376 (PIEDKAVVEKEQEPPE) are enriched in basic and acidic residues. Over residues 407 to 428 (SASTQSVSSFSSGATGASGATG) the composition is skewed to low complexity. The Ras-associating domain maps to 494–574 (RRYAIRIFNI…LNGYLKSDPL (81 aa)). LRR repeat units follow at residues 632–655 (TSDIESLDVSNNANIFLPLDFIES), 659–679 (LSSLRMVNIRASKFPANVTDA), 681–702 (KLVSLDLERNFIKKVPDSIFKL), 704–726 (NLTIVNLQCNNLERLPPGFSKLK), 727–748 (NLQLLDISSNKFVNYPEVINSC), 750–771 (NLLQIDLSYNKIHSLPVSINQL), 773–794 (KLAKMNLFNNRLTSVGDLSQMK), 795–816 (NLRTLNLRCNRVTSIECHAPNL), 817–834 (QNLFLTDNRISTFDDDLT), 835–856 (RLRTLELQQNPITSMVCGGNYM), 858–879 (NMTSLSLNKAKLSSFSAELLSK), 882–903 (RLEKLELNENNLTQLPPEINKL), 905–926 (RLIYLSVARNKLESIPDEISDL), 928–950 (SLKSLDLHSNNLRMLMNNLEDLE), 951–971 (LTSLNVSSNLLTGFHGSPAKF), 982–1004 (SLLFLSVADNNLTDSIWPLVNTF), 1006–1027 (NLKTLNLSYNNFVEISDLKLQN), 1028–1048 (LTELYLSGNNFTSLPGEAVQH), 1051–1073 (SLKVLMLNGNKLLSLPAELSQLS), 1074–1096 (RLSVLDVGSNQLKYNISNYHYDW), 1103–1124 (DLKYLNFSGNKRFEIKSALDPE), and 1135–1160 (LKQLRVLGLMDVTLKTSKVPDESVSI). Positions 1173-1439 (RYGVADTLGQ…DNITILCVSL (267 aa)) constitute a PPM-type phosphatase domain. The region spanning 1483 to 1620 (AIVFTDIKNS…PVVNKAARVS (138 aa)) is the Guanylate cyclase domain. Residues aspartate 1488 and aspartate 1531 each coordinate Mg(2+).

The protein belongs to the adenylyl cyclase class-3 family. Mg(2+) serves as cofactor.

The enzyme catalyses ATP = 3',5'-cyclic AMP + diphosphate. In terms of biological role, plays essential roles in regulation of cellular metabolism by catalyzing the synthesis of a second messenger, cAMP. This Lachancea kluyveri (Yeast) protein is Adenylate cyclase (CYR1).